The primary structure comprises 74 residues: Omega-conotoxin-like PuIIA (74 aa).

The first 22 residues, 1–22 (MKLTCVVIVAVLFLTACQLITA), serve as a signal peptide directing secretion. A propeptide spanning residues 23-46 (ETYSRGEQKHRALSSTDKNSKLTR) is cleaved from the precursor. 3 cysteine pairs are disulfide-bonded: Cys48–Cys62, Cys55–Cys66, and Cys61–Cys73.

Belongs to the conotoxin O1 superfamily. As to expression, expressed by the venom duct.

It localises to the secreted. Functionally, omega-conotoxins act at presynaptic membranes, they bind and block voltage-gated calcium channels (Cav). The chain is Omega-conotoxin-like PuIIA from Conus pulicarius (Flea-bitten cone).